A 196-amino-acid chain; its full sequence is Probable splicing factor, arginine/serine-rich 4 (196 aa).

Residues 19–97 enclose the RRM domain; that stretch reads TSLKIDNLSY…RELRVTLAKY (79 aa). A compositionally biased stretch (basic and acidic residues) spans 91–106; the sequence is RVTLAKYDRPSDERGG. The tract at residues 91-196 is disordered; the sequence is RVTLAKYDRP…SPSRSRSNSR (106 aa). Basic residues predominate over residues 112–141; that stretch reads GRRRSRSPRRRSRSPRYSRSRSPRRSRSRT. Composition is skewed to basic and acidic residues over residues 145–160 and 167–176; these read PSRDRRDSPDRRDNSR and PPREDGSPKE. Positions 184 to 196 are enriched in low complexity; the sequence is ASRSPSRSRSNSR.

The protein belongs to the splicing factor SR family. In terms of processing, extensively phosphorylated on serine residues in the RS domain.

The protein localises to the nucleus. Functionally, may play a functionally redundant role in embryogenesis. This chain is Probable splicing factor, arginine/serine-rich 4 (rsp-4), found in Caenorhabditis elegans.